A 589-amino-acid polypeptide reads, in one-letter code: V-type ATP synthase alpha chain (589 aa).

Gly-232–Thr-239 contributes to the ATP binding site.

This sequence belongs to the ATPase alpha/beta chains family.

It catalyses the reaction ATP + H2O + 4 H(+)(in) = ADP + phosphate + 5 H(+)(out). Its function is as follows. Produces ATP from ADP in the presence of a proton gradient across the membrane. The V-type alpha chain is a catalytic subunit. The sequence is that of V-type ATP synthase alpha chain from Acetivibrio thermocellus (strain ATCC 27405 / DSM 1237 / JCM 9322 / NBRC 103400 / NCIMB 10682 / NRRL B-4536 / VPI 7372) (Clostridium thermocellum).